The chain runs to 95 residues: Putative per-hexamer repeat protein 4 (95 aa).

This Mus musculus (Mouse) protein is Putative per-hexamer repeat protein 4 (Phxr4).